A 401-amino-acid polypeptide reads, in one-letter code: Imidazolonepropionase (401 aa).

Residues H66 and H68 each contribute to the Fe(3+) site. Zn(2+) is bound by residues H66 and H68. Residues R75, Y138, and H171 each contribute to the 4-imidazolone-5-propanoate site. Y138 is a binding site for N-formimidoyl-L-glutamate. H236 is a binding site for Fe(3+). H236 lines the Zn(2+) pocket. 4-imidazolone-5-propanoate is bound at residue Q239. D311 serves as a coordination point for Fe(3+). D311 contributes to the Zn(2+) binding site. N313 and G315 together coordinate N-formimidoyl-L-glutamate. Position 316 (T316) interacts with 4-imidazolone-5-propanoate.

It belongs to the metallo-dependent hydrolases superfamily. HutI family. It depends on Zn(2+) as a cofactor. The cofactor is Fe(3+).

It is found in the cytoplasm. The catalysed reaction is 4-imidazolone-5-propanoate + H2O = N-formimidoyl-L-glutamate. It functions in the pathway amino-acid degradation; L-histidine degradation into L-glutamate; N-formimidoyl-L-glutamate from L-histidine: step 3/3. Catalyzes the hydrolytic cleavage of the carbon-nitrogen bond in imidazolone-5-propanoate to yield N-formimidoyl-L-glutamate. It is the third step in the universal histidine degradation pathway. This chain is Imidazolonepropionase, found in Pseudomonas fluorescens (strain ATCC BAA-477 / NRRL B-23932 / Pf-5).